Reading from the N-terminus, the 447-residue chain is MTAHEVNFDGLVGLTHHYAGLSFGNEASTRHRFQVSNPRLAVKQGLLKMKALADAGFPQAVIPPHERPFIPALRQLGFTGSDEQILDKVARQAPRWLSSVSSASPMWVANAATVCPSADALDGKVHLTVANLNNKFHRALEAPVTEALLRAIFRDESQFSVHSALPQVALLGDEGAANHNRLGGEYGSAGVQLFVYGREEENEIRPARYPARQSREASEAVARLNQVNPQQVIFAQQNPEVIDQGVFHNDVIAVSNRQVLFCHEAAFARQKVLINQLRTCVDGFMAIEVPAGEVSVSDAVATYLFNSQLLSRDDGSMLLVLPRECQDHVGVWRYLNKLVAEDNPISAMQVFDLRESMANGGGPACLRLRVVLTEEERRAVNPAVMMNDALFTALNSWADRYYRDRLTAADLADPLLLREGREALDMLTHLLDLGSVYPFQQTGAADG.

Residues 19-28 (AGLSFGNEAS), N110, and 137-138 (HR) contribute to the substrate site. E174 is a catalytic residue. R212 provides a ligand contact to substrate. H248 is an active-site residue. Substrate is bound by residues D250 and N359. The Nucleophile role is filled by C365.

It belongs to the succinylarginine dihydrolase family. Homodimer.

The catalysed reaction is N(2)-succinyl-L-arginine + 2 H2O + 2 H(+) = N(2)-succinyl-L-ornithine + 2 NH4(+) + CO2. The protein operates within amino-acid degradation; L-arginine degradation via AST pathway; L-glutamate and succinate from L-arginine: step 2/5. Catalyzes the hydrolysis of N(2)-succinylarginine into N(2)-succinylornithine, ammonia and CO(2). The polypeptide is N-succinylarginine dihydrolase (Salmonella schwarzengrund (strain CVM19633)).